A 103-amino-acid polypeptide reads, in one-letter code: Host transcription reprogramming factor 6 (103 aa).

An N-terminal signal peptide occupies residues 1–19 (MRATTAFQVIAFLAVGAAA). The segment at 66–92 (YWCPNQVCAKTFATQEERDHHIANTVH) adopts a C2H2-type zinc-finger fold. A disordered region spans residues 82-103 (ERDHHIANTVHPTNSKRDVLLQ).

It localises to the secreted. It is found in the host nucleus. In terms of biological role, probable secreted effector that translocates into the nuclei of host cells to reprogram the expression of targeted genes by binding on effector binding elements in rice. This Pyricularia oryzae (strain 70-15 / ATCC MYA-4617 / FGSC 8958) (Rice blast fungus) protein is Host transcription reprogramming factor 6.